We begin with the raw amino-acid sequence, 117 residues long: UPF0342 protein BcerKBAB4_0767 (117 aa).

This sequence belongs to the UPF0342 family.

The sequence is that of UPF0342 protein BcerKBAB4_0767 from Bacillus mycoides (strain KBAB4) (Bacillus weihenstephanensis).